The following is a 635-amino-acid chain: Leucine-rich repeat and fibronectin type-III domain-containing protein 4 (635 aa).

A signal peptide spans 1–16 (MAPPLLLLLLASGAAA). The 32-residue stretch at 17-48 (CPLPCVCQNLSESLSTLCAHRGLLFVPPNVDR) folds into the LRRNT domain. Residues 17–518 (CPLPCVCQNL…LQAHVLGGTL (502 aa)) lie on the Extracellular side of the membrane. Residues N25 and N70 are each glycosylated (N-linked (GlcNAc...) asparagine). 7 LRR repeats span residues 49 to 70 (RTVE…DFRN), 73 to 94 (GLVD…AFGD), 97 to 118 (SLRS…SLRG), 121 to 142 (NLQH…AFDD), 146 to 161 (SLED…RQVP), 170 to 191 (ALHT…AFAQ), and 194 to 215 (QLSR…PLFS). In terms of domain architecture, LRRCT spans 234–280 (NPLHCNCELLWLRRLARPDDLETCASPPGLAGRYFWAVPEGEFSCEP). Residues 281-367 (PLIARHTQRL…GEATARVELR (87 aa)) enclose the Ig-like domain. Cysteines 302 and 351 form a disulfide. N-linked (GlcNAc...) asparagine glycans are attached at residues N324, N333, N376, and N440. The disordered stretch occupies residues 373-410 (HGGNSSAEGGRPGPSDIAASARTAAEGEGTLESEPAVQ). A Fibronectin type-III domain is found at 405 to 502 (SEPAVQVTEV…GCAHFSTLPA (98 aa)). A helical membrane pass occupies residues 519–539 (TVAVGGVLVAALLVFTVALLV). Residues 540–635 (RGRGAGNGRL…SAERLEESVV (96 aa)) are Cytoplasmic-facing. Positions 555–583 (HVQSQTNGGPSPTPKAHPPRSPPPRPQRS) are disordered. The segment covering 565–580 (SPTPKAHPPRSPPPRP) has biased composition (pro residues). A phosphoserine mark is found at S585 and S626. The short motif at 632–635 (ESVV) is the PDZ-binding element.

This sequence belongs to the LRFN family. As to quaternary structure, can form heteromeric complexes with LRFN1, LRFN2, LRFN3 and LRFN5. Unable to form homophilic interactions across cell junctions. Interacts with DLG1, DLG2, DLG3 and DLG4. Glycosylated.

It is found in the membrane. Its function is as follows. Promotes neurite outgrowth in hippocampal neurons. May play a role in redistributing DLG4 to the cell periphery. In Homo sapiens (Human), this protein is Leucine-rich repeat and fibronectin type-III domain-containing protein 4 (LRFN4).